Reading from the N-terminus, the 67-residue chain is Large ribosomal subunit protein bL35 (67 aa).

The protein belongs to the bacterial ribosomal protein bL35 family.

The sequence is that of Large ribosomal subunit protein bL35 from Paramagnetospirillum magneticum (strain ATCC 700264 / AMB-1) (Magnetospirillum magneticum).